A 506-amino-acid polypeptide reads, in one-letter code: Histidine ammonia-lyase (506 aa).

A cross-link (5-imidazolinone (Ala-Gly)) is located at residues 143–145 (ASG). A 2,3-didehydroalanine (Ser) modification is found at Ser-144.

It belongs to the PAL/histidase family. Contains an active site 4-methylidene-imidazol-5-one (MIO), which is formed autocatalytically by cyclization and dehydration of residues Ala-Ser-Gly.

It localises to the cytoplasm. It carries out the reaction L-histidine = trans-urocanate + NH4(+). It functions in the pathway amino-acid degradation; L-histidine degradation into L-glutamate; N-formimidoyl-L-glutamate from L-histidine: step 1/3. The protein is Histidine ammonia-lyase of Salmonella arizonae (strain ATCC BAA-731 / CDC346-86 / RSK2980).